The sequence spans 218 residues: Glutathione S-transferase Mu 7 (218 aa).

A GST N-terminal domain is found at 2 to 88 (PMTLGYWDIR…YLGRKHNLCG (87 aa)). Glutathione-binding positions include 7-8 (YW), 46-50 (WLNEK), 59-60 (NL), and 72-73 (QS). The region spanning 90–208 (TEEERIRVDI…KSSRFLPRPL (119 aa)) is the GST C-terminal domain. Position 116 (tyrosine 116) interacts with substrate.

Belongs to the GST superfamily. Mu family. In terms of assembly, homodimer.

Its subcellular location is the cytoplasm. The catalysed reaction is RX + glutathione = an S-substituted glutathione + a halide anion + H(+). In terms of biological role, conjugation of reduced glutathione to a wide number of exogenous and endogenous hydrophobic electrophiles. The protein is Glutathione S-transferase Mu 7 of Rattus norvegicus (Rat).